Consider the following 330-residue polypeptide: 4-hydroxythreonine-4-phosphate dehydrogenase (330 aa).

T133 is a binding site for substrate. Positions 161, 206, and 261 each coordinate a divalent metal cation. K269, N278, and R287 together coordinate substrate.

Belongs to the PdxA family. As to quaternary structure, homodimer. Zn(2+) serves as cofactor. Requires Mg(2+) as cofactor. The cofactor is Co(2+).

Its subcellular location is the cytoplasm. The catalysed reaction is 4-(phosphooxy)-L-threonine + NAD(+) = 3-amino-2-oxopropyl phosphate + CO2 + NADH. It participates in cofactor biosynthesis; pyridoxine 5'-phosphate biosynthesis; pyridoxine 5'-phosphate from D-erythrose 4-phosphate: step 4/5. Functionally, catalyzes the NAD(P)-dependent oxidation of 4-(phosphooxy)-L-threonine (HTP) into 2-amino-3-oxo-4-(phosphooxy)butyric acid which spontaneously decarboxylates to form 3-amino-2-oxopropyl phosphate (AHAP). The chain is 4-hydroxythreonine-4-phosphate dehydrogenase from Xylella fastidiosa (strain Temecula1 / ATCC 700964).